We begin with the raw amino-acid sequence, 205 residues long: MGRNPLIIGVTGRIASGKDTVSKIISNKYGFYEINADKLGHSVLHEKKEEIVKIFGQKILNTKNEIDKLLLRNLVFNDNKELKKLESVSHPVILSKIKKILIQNQSTKIIINAALLFKMNLEKLCDYIIVLKAKNSIIKNRLSYSIPNIDSNMINKILKIQKDIFFEKNIINLKIINIINNKNYAYLEKEIEKKMQGIINYERFE.

A DPCK domain is found at 7-205; that stretch reads IIGVTGRIAS…QGIINYERFE (199 aa). ATP is bound at residue 15 to 20; the sequence is ASGKDT.

Belongs to the CoaE family.

The protein resides in the cytoplasm. It catalyses the reaction 3'-dephospho-CoA + ATP = ADP + CoA + H(+). It participates in cofactor biosynthesis; coenzyme A biosynthesis; CoA from (R)-pantothenate: step 5/5. Catalyzes the phosphorylation of the 3'-hydroxyl group of dephosphocoenzyme A to form coenzyme A. The polypeptide is Dephospho-CoA kinase (Borreliella burgdorferi (strain ATCC 35210 / DSM 4680 / CIP 102532 / B31) (Borrelia burgdorferi)).